Here is a 375-residue protein sequence, read N- to C-terminus: Adiponectin receptor protein 1 (375 aa).

Positions M1–E60 are disordered. Residues M1–G136 are Cytoplasmic-facing. The helical transmembrane segment at N137–L157 threads the bilayer. Residues R158–K170 are Extracellular-facing. A helical transmembrane segment spans residues V171–H191. H191 is a Zn(2+) binding site. Over T192–T203 the chain is Cytoplasmic. A helical transmembrane segment spans residues F204–L224. The Extracellular portion of the chain corresponds to Y225–P234. Residues R235–W255 traverse the membrane as a helical segment. Residues D256–R264 lie on the Cytoplasmic side of the membrane. A helical transmembrane segment spans residues Q265 to F285. Residues T286 to G298 lie on the Extracellular side of the membrane. The chain crosses the membrane as a helical span at residues Q299 to A319. Residues R320–H337 lie on the Cytoplasmic side of the membrane. The Zn(2+) site is built by H337 and H341. Residues Q338–L358 traverse the membrane as a helical segment. The Extracellular portion of the chain corresponds to Q359–L375.

The protein belongs to the ADIPOR family. May form homooligomers and heterooligomers with ADIPOR2. Interacts with APPL2 (via BAR domain); hinders the accessibility of APPL1 to ADIPOR1; negatively regulates adiponectin signaling; ADIPOQ dissociates this interaction and facilitates the recruitment of APPL1 to ADIPOR1. Interacts with APPL1; ADIPOQ enhances this interaction; inhibites adiponectin-stimulated binding of APPL2 to ADIPOR1. As to expression, detected in brain and quadriceps muscle (at protein level). Widely expressed. Expressed in heart, kidney, liver, lung, skeletal muscle, white adipose tissue, brown adipose tissue, aorta and spleen. Weakly expressed in brain and testis.

Its subcellular location is the cell membrane. Its function is as follows. Receptor for ADIPOQ, an essential hormone secreted by adipocytes that regulates glucose and lipid metabolism. Required for normal glucose and fat homeostasis and for maintaining a normal body weight. ADIPOQ-binding activates a signaling cascade that leads to increased AMPK activity, and ultimately to increased fatty acid oxidation, increased glucose uptake and decreased gluconeogenesis. Has high affinity for globular adiponectin and low affinity for full-length adiponectin. The sequence is that of Adiponectin receptor protein 1 from Mus musculus (Mouse).